Here is a 333-residue protein sequence, read N- to C-terminus: Phenylalanine--tRNA ligase alpha subunit (333 aa).

Residue Glu254 participates in Mg(2+) binding.

This sequence belongs to the class-II aminoacyl-tRNA synthetase family. Phe-tRNA synthetase alpha subunit type 1 subfamily. As to quaternary structure, tetramer of two alpha and two beta subunits. Requires Mg(2+) as cofactor.

The protein localises to the cytoplasm. The catalysed reaction is tRNA(Phe) + L-phenylalanine + ATP = L-phenylalanyl-tRNA(Phe) + AMP + diphosphate + H(+). The chain is Phenylalanine--tRNA ligase alpha subunit (pheS) from Xylella fastidiosa (strain 9a5c).